The sequence spans 169 residues: MQIETLTVEPLTKEAFAPFGDVIEVEGAQLRLINNGTTERYHDLARMEAAGTQTRVLINIFRGQSFAAPIDIMMMERHPFGSQAFIPLNGRPFLVVVAEDAGAGPARPRAFLARGDQGVNYLRNIWHHPLLALEQKSDFLVVDRAGREDNLEEYFFSDYAYRIETTQTA.

This sequence belongs to the ureidoglycolate lyase family. Homodimer. Ni(2+) is required as a cofactor.

It carries out the reaction (S)-ureidoglycolate = urea + glyoxylate. Its pathway is nitrogen metabolism; (S)-allantoin degradation. Its function is as follows. Catalyzes the catabolism of the allantoin degradation intermediate (S)-ureidoglycolate, generating urea and glyoxylate. Involved in the utilization of allantoin as nitrogen source. The chain is Ureidoglycolate lyase from Brucella abortus biovar 1 (strain 9-941).